Reading from the N-terminus, the 105-residue chain is MKPTAADIISRATGGRAGNNIVDIIQAHNSPTEGDQLGQFVNRNRSLIKEFVLVVCGFLIFVMIVLFFMLLVVILLNQETITVQKQKYETTLLENYDIRNRNATI.

The protein belongs to the baculoviridae 11 kDa protein family.

This is an uncharacterized protein from Autographa californica nuclear polyhedrosis virus (AcMNPV).